Here is a 374-residue protein sequence, read N- to C-terminus: Proteinase-activated receptor 3 (374 aa).

An N-terminal signal peptide occupies residues 1–21 (MKALIFAAAGLLLLLPTFCQS). Residues 22-38 (GMENDTNNLAKPTLPIK) constitute a propeptide, removed for receptor activation. Residues Asn25 and Asn82 are each glycosylated (N-linked (GlcNAc...) asparagine). Over 39–94 (TFRGAPPNSFEEFPFSALEGWTGATITVKIKCPEESASHLHVKNATMGYLTSSLST) the chain is Extracellular. Residues 95 to 120 (KLIPAIYLLVFVVGVPANAVTLWMLF) form a helical membrane-spanning segment. The Cytoplasmic segment spans residues 121 to 128 (FRTRSICT). The chain crosses the membrane as a helical span at residues 129–148 (TVFYTNLAIADFLFCVTLPF). Topologically, residues 149-167 (KIAYHLNGNNWVFGEVLCR) are extracellular. Cysteines 166 and 245 form a disulfide. Residues 168-189 (ATTVIFYGNMYCSILLLACISI) form a helical membrane-spanning segment. At 190 to 206 (NRYLAIVHPFTYRGLPK) the chain is on the cytoplasmic side. The chain crosses the membrane as a helical span at residues 207–230 (HTYALVTCGLVWATVFLYMLPFFI). Residues 231 to 260 (LKQEYYLVQPDITTCHDVHNTCESSSPFQL) lie on the Extracellular side of the membrane. Residues 261-280 (YYFISLAFFGFLIPFVLIIY) traverse the membrane as a helical segment. The Cytoplasmic segment spans residues 281 to 297 (CYAAIIRTLNAYDHRWL). The chain crosses the membrane as a helical span at residues 298 to 322 (WYVKASLLILVIFTICFAPSNIILI). Residues 323-336 (IHHANYYYNNTDGL) are Extracellular-facing. The N-linked (GlcNAc...) asparagine glycan is linked to Asn331. The helical transmembrane segment at 337-361 (YFIYLIALCLGSLNSCLDPFLYFLM) threads the bilayer. The Cytoplasmic segment spans residues 362 to 374 (SKTRNHSTAYLTK).

This sequence belongs to the G-protein coupled receptor 1 family. As to quaternary structure, interacts with INSC/inscuteable and probably GPSM2. In terms of processing, a proteolytic cleavage generates a new N-terminus that functions as a tethered ligand. In terms of tissue distribution, highest expression in the megakaryocytes of the bone marrow, lower in mature megakaryocytes, in platelets and in a variety of other tissues such as heart and gut.

It is found in the cell membrane. Receptor for activated thrombin coupled to G proteins that stimulate phosphoinositide hydrolysis. This Homo sapiens (Human) protein is Proteinase-activated receptor 3 (F2RL2).